Reading from the N-terminus, the 213-residue chain is MIRLFVGLGNPGPEYEATRHNAGFWWTDALARRWNCQLQPDRSYHGLMARCTQRGTPVWLLQPMTYMNLSGKSVAALARFFKIEPAEILVVHDELDLLPGQMKLKQGGSAAGHNGLKDIQAQLGNPEFWRLRLGIGHPGVKAEVAAYVLRKPPSAEREAIEACIDRSLDAVDRMLGADMPAAMMQMHAKPPRPKPPRPVTAPGAPVPPTEPSA.

Residue tyrosine 15 participates in tRNA binding. Histidine 20 serves as the catalytic Proton acceptor. Residues tyrosine 66, asparagine 68, and asparagine 114 each contribute to the tRNA site. The segment at 186–213 (MHAKPPRPKPPRPVTAPGAPVPPTEPSA) is disordered. Over residues 196-213 (PRPVTAPGAPVPPTEPSA) the composition is skewed to pro residues.

This sequence belongs to the PTH family. As to quaternary structure, monomer.

Its subcellular location is the cytoplasm. The catalysed reaction is an N-acyl-L-alpha-aminoacyl-tRNA + H2O = an N-acyl-L-amino acid + a tRNA + H(+). Hydrolyzes ribosome-free peptidyl-tRNAs (with 1 or more amino acids incorporated), which drop off the ribosome during protein synthesis, or as a result of ribosome stalling. Functionally, catalyzes the release of premature peptidyl moieties from peptidyl-tRNA molecules trapped in stalled 50S ribosomal subunits, and thus maintains levels of free tRNAs and 50S ribosomes. The chain is Peptidyl-tRNA hydrolase from Leptothrix cholodnii (strain ATCC 51168 / LMG 8142 / SP-6) (Leptothrix discophora (strain SP-6)).